The following is a 129-amino-acid chain: Small ribosomal subunit protein uS11 (129 aa).

It belongs to the universal ribosomal protein uS11 family. In terms of assembly, part of the 30S ribosomal subunit. Interacts with proteins S7 and S18. Binds to IF-3.

Located on the platform of the 30S subunit, it bridges several disparate RNA helices of the 16S rRNA. Forms part of the Shine-Dalgarno cleft in the 70S ribosome. The sequence is that of Small ribosomal subunit protein uS11 from Ectopseudomonas mendocina (strain ymp) (Pseudomonas mendocina).